The following is a 142-amino-acid chain: Trafficking protein particle complex subunit 1 (142 aa).

This sequence belongs to the TRAPP small subunits family. BET5 subfamily. Part of the multisubunit TRAPP (transport protein particle) complex.

Its subcellular location is the golgi apparatus. It is found in the cis-Golgi network. The protein resides in the endoplasmic reticulum. Its function is as follows. May play a role in vesicular transport from endoplasmic reticulum to Golgi. In Dictyostelium discoideum (Social amoeba), this protein is Trafficking protein particle complex subunit 1 (trappc1-1).